Here is a 279-residue protein sequence, read N- to C-terminus: Urease accessory protein UreD (279 aa).

This sequence belongs to the UreD family. UreD, UreF and UreG form a complex that acts as a GTP-hydrolysis-dependent molecular chaperone, activating the urease apoprotein by helping to assemble the nickel containing metallocenter of UreC. The UreE protein probably delivers the nickel.

The protein localises to the cytoplasm. In terms of biological role, required for maturation of urease via the functional incorporation of the urease nickel metallocenter. This is Urease accessory protein UreD from Brucella suis (strain ATCC 23445 / NCTC 10510).